The following is a 312-amino-acid chain: Carbonic anhydrase 4 (312 aa).

The first 18 residues, 1–18, serve as a signal peptide directing secretion; sequence MRMLLALLALSAARPSAS. The region spanning 21-285 is the Alpha-carbonic anhydrase domain; the sequence is SHWCYEVQAE…LGQRTVIKSG (265 aa). Cystine bridges form between C24/C36 and C46/C229. The Proton donor/acceptor role is filled by H88. Residues H115, H117, and H140 each coordinate Zn(2+). 225–226 serves as a coordination point for substrate; sequence TT. S284 is lipidated: GPI-anchor amidated serine. Residues 285–312 constitute a propeptide, removed in mature form; it reads GAPGRPLPWALPALLGPMLACLLAGFLR.

Belongs to the alpha-carbonic anhydrase family. Interacts with SLC4A4. Zn(2+) is required as a cofactor. In terms of tissue distribution, expressed in the endothelium of the choriocapillaris in eyes (at protein level). Not expressed in the retinal epithelium at detectable levels.

Its subcellular location is the cell membrane. It carries out the reaction hydrogencarbonate + H(+) = CO2 + H2O. Its activity is regulated as follows. Activated by histamine, L-adrenaline, D-phenylalanine, L- and D-histidine. Inhibited by coumarins, saccharin, sulfonamide derivatives such as acetazolamide and Foscarnet (phosphonoformate trisodium salt). Catalyzes the reversible hydration of carbon dioxide into bicarbonate and protons and thus is essential to maintaining intracellular and extracellular pH. May stimulate the sodium/bicarbonate transporter activity of SLC4A4 that acts in pH homeostasis. It is essential for acid overload removal from the retina and retina epithelium, and acid release in the choriocapillaris in the choroid. In Homo sapiens (Human), this protein is Carbonic anhydrase 4.